The following is a 1589-amino-acid chain: Centrosomal protein of 170 kDa protein B (1589 aa).

The FHA domain maps to 23–73; the sequence is IFVGREECELMLQSRSVDKQHAVINYDQDRDEHWVKDLGSLNGTFVNDMRI. Disordered stretches follow at residues 130-261, 287-309, 325-388, and 409-583; these read RSEA…GAAP, ITKF…EMVS, LLHR…RLQR, and FDED…EVEE. Basic and acidic residues-rich tracts occupy residues 147-156 and 243-253; these read RPEKGDRRPG and PAHEMPTKDAE. Basic and acidic residues predominate over residues 330–344; that stretch reads GPGDDRHSTKSDLPV. Phosphoserine is present on residues S360 and S421. Basic and acidic residues-rich tracts occupy residues 430–446 and 467–476; these read PKAD…RDRP and LKREKTEERL. Low complexity predominate over residues 478–489; the sequence is SPSPASRTPARP. S480 and S492 each carry phosphoserine. Positions 520–530 are enriched in pro residues; it reads EKVPPVLPAPL. The residue at position 536 (S536) is a Phosphoserine. The segment covering 538–548 has biased composition (pro residues); sequence VGPPTPPPAPT. T542 carries the post-translational modification Phosphothreonine. S597, S619, S655, S711, S721, S746, S748, S751, S753, S772, S829, S853, S954, S972, S986, and S988 each carry phosphoserine. Disordered regions lie at residues 598–895, 934–1316, 1350–1374, and 1532–1552; these read PELS…LQDL, DAEC…PYGF, DGDT…TPAS, and AQPG…PASA. Low complexity predominate over residues 711 to 722; that stretch reads SPAGPESSRRSG. Positions 957–972 are enriched in polar residues; it reads DTASTVSLRSGKSGPS. The segment covering 1029 to 1038 has biased composition (basic residues); that stretch reads SAIRRGHRPR. Phosphoserine occurs at positions 1135, 1179, and 1199. A compositionally biased stretch (polar residues) spans 1221–1230; the sequence is AANTATTTGP. The segment covering 1286–1301 has biased composition (low complexity); it reads PRAGSSSRARSRAPGP. T1304 bears the Phosphothreonine mark. Residues S1356 and S1362 each carry the phosphoserine modification. Residues 1363–1374 show a composition bias toward polar residues; sequence ASLSNMPSTPAS. The span at 1542-1552 shows a compositional bias: low complexity; that stretch reads AAQSPPSPASA. A phosphoserine mark is found at S1545 and S1548.

The protein belongs to the CEP170 family.

It localises to the cytoplasm. Its subcellular location is the cytoskeleton. Functionally, plays a role in microtubule organization. The sequence is that of Centrosomal protein of 170 kDa protein B (CEP170B) from Homo sapiens (Human).